A 256-amino-acid chain; its full sequence is Small ribosomal subunit protein uS2 (256 aa).

Belongs to the universal ribosomal protein uS2 family.

This Acidiphilium cryptum (strain JF-5) protein is Small ribosomal subunit protein uS2.